The following is a 368-amino-acid chain: Nicotinate-nucleotide--dimethylbenzimidazole phosphoribosyltransferase (368 aa).

The active-site Proton acceptor is glutamate 314. Residues 344–368 form a disordered region; the sequence is DRADGADNSADSGASAGTVASDPTV. Over residues 349–360 the composition is skewed to low complexity; the sequence is ADNSADSGASAG.

This sequence belongs to the CobT family.

The catalysed reaction is 5,6-dimethylbenzimidazole + nicotinate beta-D-ribonucleotide = alpha-ribazole 5'-phosphate + nicotinate + H(+). It participates in nucleoside biosynthesis; alpha-ribazole biosynthesis; alpha-ribazole from 5,6-dimethylbenzimidazole: step 1/2. Its function is as follows. Catalyzes the synthesis of alpha-ribazole-5'-phosphate from nicotinate mononucleotide (NAMN) and 5,6-dimethylbenzimidazole (DMB). This Corynebacterium efficiens (strain DSM 44549 / YS-314 / AJ 12310 / JCM 11189 / NBRC 100395) protein is Nicotinate-nucleotide--dimethylbenzimidazole phosphoribosyltransferase.